Reading from the N-terminus, the 1863-residue chain is Calcineurin-binding protein 1 (1863 aa).

3 TPR repeats span residues 30–65, 81–116, and 118–150; these read LSQT…ITNS, FLAL…DAKD, and VLWN…SPNN. The disordered stretch occupies residues 315-361; the sequence is ERESGGSVKEKEPVFSEEHPQERRSTRLERLRNQKPEKEGLEFDNSK. 12 TPR repeats span residues 543–576, 602–637, 866–900, 955–988, 990–1009, 1011–1031, 1143–1183, 1226–1263, 1264–1297, 1306–1339, 1377–1412, and 1508–1541; these read ARYF…LGRE, IHEI…LAPL, INSP…EKNE, QCFF…DYQT, EQCV…SSRT, LVKL…PPDD, FESW…SQRV, VPFY…RQDW, SHAF…NPSA, ASRL…KDTA, EGVW…LAQG, and NSLR…SMSR. Residues 894–923 show a composition bias toward basic and acidic residues; sequence VHVEKNENNKTESKKDGSEEQVGYREKEQS. The interval 894 to 941 is disordered; it reads VHVEKNENNKTESKKDGSEEQVGYREKEQSEQQSKQIPEHTEEVAEEE. The disordered stretch occupies residues 1813-1840; it reads KMKRGASTSSVVPSVQSGGTSEPEPAPK. The span at 1818–1832 shows a compositional bias: polar residues; it reads ASTSSVVPSVQSGGT.

As to quaternary structure, component of the HIRA complex made of UBN1, UBN2, ASF1A, CABIN1 and HIRA. As to expression, expressed at low levels in seedlings.

It is found in the nucleus. Its function is as follows. May be required for replication-independent chromatin assembly. The polypeptide is Calcineurin-binding protein 1 (Arabidopsis thaliana (Mouse-ear cress)).